Reading from the N-terminus, the 1828-residue chain is Dedicator of cytokinesis protein 2 (1828 aa).

An SH3 domain is found at 8 to 69 (DKERHGVAIY…PTSFIHLKEV (62 aa)). Residue K304 is modified to N6-acetyllysine. One can recognise a C2 DOCK-type domain in the interval 423–607 (RNDIYITLLQ…DVFSISTLVC (185 aa)). 2 positions are modified to phosphoserine: S588 and S593. The residue at position 738 (K738) is an N6-acetyllysine. Positions 1210 to 1621 (YKDNNREEMY…VEKEYGVREM (412 aa)) constitute a DOCKER domain. The segment at 1652-1703 (SDCSTPSKVPAESFDLESAPPKTPKVEEEPISPGSTLPEVKLRRSKKRTKRS) is disordered. A phosphoserine mark is found at S1683, S1704, S1729, and S1782.

This sequence belongs to the DOCK family. Homodimer. Interacts with RAC1 and RAC2. Interacts with CRKL and VAV. Interacts with CD3Z. As to expression, specifically expressed in hematopoietic cells.

The protein resides in the endomembrane system. It is found in the cytoplasm. Its subcellular location is the cytoskeleton. In terms of biological role, involved in cytoskeletal rearrangements required for lymphocyte migration in response of chemokines. Activates RAC1 and RAC2, but not CDC42, by functioning as a guanine nucleotide exchange factor (GEF), which exchanges bound GDP for free GTP. May also participate in IL2 transcriptional activation via the activation of RAC2. This chain is Dedicator of cytokinesis protein 2 (Dock2), found in Mus musculus (Mouse).